Consider the following 202-residue polypeptide: N-acetyltransferase 9-like protein (202 aa).

Residues 34–184 (EEIRRLTGSE…FTFELPKNRL (151 aa)) enclose the N-acetyltransferase domain.

It belongs to the acetyltransferase family. GNAT subfamily.

This chain is N-acetyltransferase 9-like protein, found in Caenorhabditis elegans.